We begin with the raw amino-acid sequence, 88 residues long: Secretion system apparatus protein SsaS (88 aa).

Transmembrane regions (helical) follow at residues 15–35 and 55–75; these read WIVL…GVIV and LLAI…ILLN.

This sequence belongs to the FliQ/MopD/SpaQ family.

It is found in the cell membrane. Part of a type III secretion system. In Salmonella typhimurium (strain LT2 / SGSC1412 / ATCC 700720), this protein is Secretion system apparatus protein SsaS (ssaS).